A 1429-amino-acid chain; its full sequence is Protein lin-12 (1429 aa).

An N-terminal signal peptide occupies residues methionine 1 to leucine 15. The Extracellular portion of the chain corresponds to serine 16–asparagine 908. EGF-like domains follow at residues histidine 20 to glutamate 61 and threonine 114 to glutamate 150. Cystine bridges form between cysteine 24–cysteine 35, cysteine 29–cysteine 49, cysteine 51–cysteine 60, cysteine 118–cysteine 129, cysteine 123–cysteine 138, cysteine 140–cysteine 149, cysteine 156–cysteine 169, cysteine 163–cysteine 178, and cysteine 180–cysteine 189. The N-linked (GlcNAc...) asparagine glycan is linked to asparagine 41. The EGF-like 3; calcium-binding domain occupies aspartate 152–leucine 190. N-linked (GlcNAc...) asparagine glycosylation occurs at asparagine 165. N-linked (GlcNAc...) asparagine glycosylation is present at asparagine 194. EGF-like domains follow at residues lysine 201 to glutamate 246, lysine 250 to glutamine 285, glycine 287 to glutamate 323, and glutamate 323 to glutamate 363. 30 disulfides stabilise this stretch: cysteine 205/cysteine 227, cysteine 221/cysteine 234, cysteine 236/cysteine 245, cysteine 254/cysteine 264, cysteine 259/cysteine 273, cysteine 275/cysteine 284, cysteine 291/cysteine 302, cysteine 296/cysteine 311, cysteine 313/cysteine 322, cysteine 327/cysteine 339, cysteine 334/cysteine 351, cysteine 353/cysteine 362, cysteine 369/cysteine 381, cysteine 375/cysteine 390, cysteine 392/cysteine 401, cysteine 408/cysteine 419, cysteine 413/cysteine 429, cysteine 431/cysteine 440, cysteine 462/cysteine 475, cysteine 469/cysteine 480, cysteine 482/cysteine 491, cysteine 507/cysteine 518, cysteine 512/cysteine 529, cysteine 531/cysteine 540, cysteine 547/cysteine 558, cysteine 552/cysteine 567, cysteine 569/cysteine 578, cysteine 586/cysteine 597, cysteine 591/cysteine 607, and cysteine 609/cysteine 618. In terms of domain architecture, EGF-like 8; calcium-binding spans aspartate 365–aspartate 402. The N-linked (GlcNAc...) asparagine glycan is linked to asparagine 378. EGF-like domains are found at residues proline 404 to glutamate 441, glycine 449 to glutamate 492, serine 503 to glutamate 541, histidine 543 to glutamate 579, and lysine 582 to glutamate 619. Asparagine 515 is a glycosylation site (N-linked (GlcNAc...) asparagine). Asparagine 623 carries an N-linked (GlcNAc...) asparagine glycan. Cystine bridges form between cysteine 638–cysteine 661, cysteine 643–cysteine 656, cysteine 652–cysteine 668, cysteine 678–cysteine 702, cysteine 684–cysteine 697, cysteine 693–cysteine 709, cysteine 716–cysteine 742, cysteine 724–cysteine 737, and cysteine 733–cysteine 749. LNR repeat units follow at residues cysteine 638–proline 674, cysteine 678–cysteine 709, and cysteine 716–asparagine 754. Residues asparagine 751, asparagine 754, and asparagine 900 are each glycosylated (N-linked (GlcNAc...) asparagine). A helical transmembrane segment spans residues alanine 909–glycine 931. At asparagine 932–phenylalanine 1429 the chain is on the cytoplasmic side. An RAM domain region spans residues arginine 933–glutamate 952. 5 ANK repeats span residues aspartate 1093–isoleucine 1122, serine 1126–glutamate 1158, asparagine 1162–tyrosine 1194, lysine 1206–lysine 1236, and aspartate 1240–alanine 1269. The interval isoleucine 1308–asparagine 1374 is disordered. Residues lysine 1319 to arginine 1330 show a composition bias toward basic residues. Over residues histidine 1361 to asparagine 1374 the composition is skewed to polar residues.

It belongs to the NOTCH family. As to quaternary structure, may interact with dsl-1. May interact with lag-2. May interact with osm-11. Interacts with sel-10. When activated, the lin-12/Notch intracellular domain (NICD) can become a component of a complex consisting of at least the NICD, lag-1 and sel-8/lag-3. The NICD probably facilitates ordered assembly of the ternary complex via allosteric interactions of its RBP-j associated molecule (RAM) domain with lag-1. Upon binding its ligands, it is cleaved (S2 cleavage) in its extracellular domain, close to the transmembrane domain. S2 cleavage is probably mediated by the metalloproteases adm-4 and sup-17. It is then cleaved (S3 cleavage) downstream of its transmembrane domain, releasing it from the cell membrane; S3 cleavage requires a multiprotein gamma-secretase complex, which may include presenilin sel-12.

The protein localises to the apical cell membrane. The protein resides in the nucleus. Essential signaling protein which has a major role in many developmental processes; involved in cell fate decisions that require cell-cell interactions. Probable membrane-bound receptor for putative ligands lag-2, apx-1, dsl-1 and osm-11. Upon ligand activation, and releasing from the cell membrane, the lin-12/Notch intracellular domain (NICD) forms a transcriptional activator complex with lag-1 and lag-3 and regulates expression of various genes. Required for ventral cell fates in the postembryonic mesodermal lineage (M lineage) and in uterine precursor cells. Activity in cell fate decisions and tumorigenesis is negatively regulated by sel-10. Best known for involvement in cell-fate decisions during development, but also plays roles in other events. Regulates recovery from the dauer larval state. Modulates chemosensory avoidance of octanol and quiescence during molting. Promotes basement membrane mobility during tissue remodeling. Involved in establishing left-right asymmetry during intestinal organogenesis. In Caenorhabditis elegans, this protein is Protein lin-12.